The sequence spans 454 residues: Cerebellar degeneration-related protein 2 (454 aa).

Coiled coils occupy residues 44-142 (ELED…SGQG) and 192-265 (EEEN…QSEH). Positions 134-153 (EELKSSGQGRRSPGKCDQEK) are disordered. Residue Ser311 is modified to Phosphoserine. Positions 346–380 (LHEVDTQYSALKVKYEELLKKCQEEQDSLSHKAVQ) form a coiled coil.

It belongs to the CDR2 family.

In Homo sapiens (Human), this protein is Cerebellar degeneration-related protein 2 (CDR2).